A 322-amino-acid chain; its full sequence is tRNA dimethylallyltransferase (322 aa).

19–26 (GPTASGKT) lines the ATP pocket. 21-26 (TASGKT) contacts substrate. Interaction with substrate tRNA regions lie at residues 44–47 (DSAL), 168–172 (QRIQR), and 255–260 (RCVGYR).

The protein belongs to the IPP transferase family. As to quaternary structure, monomer. Requires Mg(2+) as cofactor.

It catalyses the reaction adenosine(37) in tRNA + dimethylallyl diphosphate = N(6)-dimethylallyladenosine(37) in tRNA + diphosphate. Its function is as follows. Catalyzes the transfer of a dimethylallyl group onto the adenine at position 37 in tRNAs that read codons beginning with uridine, leading to the formation of N6-(dimethylallyl)adenosine (i(6)A). The polypeptide is tRNA dimethylallyltransferase (Cupriavidus taiwanensis (strain DSM 17343 / BCRC 17206 / CCUG 44338 / CIP 107171 / LMG 19424 / R1) (Ralstonia taiwanensis (strain LMG 19424))).